Consider the following 411-residue polypeptide: Efflux pump periplasmic linker BepF (411 aa).

The stretch at 118 to 196 (FVLQKDALQA…SLEQAQINLG (79 aa)) forms a coiled coil.

The protein belongs to the membrane fusion protein (MFP) (TC 8.A.1) family. In terms of assembly, probably part of a tripartite efflux pump, which is composed of an outer membrane efflux protein, an inner membrane protein and a protein that expands the periplasmic space. Could form a tripartite pump with BepC and BepG.

It localises to the periplasm. Its function is as follows. May contribute to resistance to some drugs, such as deoxycholate, sodium dodecyl sulfate and nalidixic acid, in the absence of BepD and BepE. This chain is Efflux pump periplasmic linker BepF (bepF), found in Brucella suis biovar 1 (strain 1330).